The primary structure comprises 150 residues: Large ribosomal subunit protein bL9 (150 aa).

The protein belongs to the bacterial ribosomal protein bL9 family.

Its function is as follows. Binds to the 23S rRNA. The sequence is that of Large ribosomal subunit protein bL9 from Shewanella piezotolerans (strain WP3 / JCM 13877).